A 487-amino-acid polypeptide reads, in one-letter code: MSQRVLTTESGAPVADNQNSASAGIGGPLLIQDQHLIEKLARFNRERIPERVVHARGSGAYGHFEVTDDVSGFTHADFLNTVGKRTEVFLRFSTVADSLGGADAVRDPRGFALKFYTEEGNYDLVGNNTPVFFIKDPIKFPDFIHSQKRDPFTGRQEPDNVFDFWAHSPEATHQITWLMGDRGIPASYRHMDGFGSHTYQWTNARGESFFVKYHFKTDQGIRCLTADEAAKLAGEDPTSHQTDLVQAIERGVYPSWTLHVQLMPVAEAANYRFNPFDVTKVWPHADYPLKRVGRLVLDRNPDNVFAEVEQAAFSPNNFVPGIGPSPDKMLQGRLFAYADAHRYRLGVNHTQLAVNAPKAVPGGAANYGRDGLMAANPQGRYAKNYEPNSYDGPAETGTPLAAPLAVSGHTGTHEAPLHTKDDHFVQAGALYRLMSEDEKQRLVANLAGGLSQVSRNDVVEKNLAHFHAADPEYGKRVEEAVRALRED.

A disordered region spans residues 1–20; sequence MSQRVLTTESGAPVADNQNS. Active-site residues include histidine 54 and asparagine 127. Tyrosine 337 lines the heme pocket.

Belongs to the catalase family. Heme serves as cofactor.

The catalysed reaction is 2 H2O2 = O2 + 2 H2O. Its function is as follows. Decomposes hydrogen peroxide into water and oxygen; serves to protect cells from the toxic effects of hydrogen peroxide. The protein is Catalase (katA) of Streptomyces coelicolor (strain ATCC BAA-471 / A3(2) / M145).